We begin with the raw amino-acid sequence, 883 residues long: HTH-type transcriptional regulator AlkS (883 aa).

The HTH luxR-type domain occupies 816 to 881 (ENKAGDFLTL…QAIIEAERQG (66 aa)). The segment at residues 840-859 (NKQIATKMYVTEDAIKWHMR) is a DNA-binding region (H-T-H motif).

It functions in the pathway hydrocarbon metabolism; alkane degradation. Its function is as follows. May act as a transcriptional regulator of AlkB. This Pseudomonas putida (Arthrobacter siderocapsulatus) protein is HTH-type transcriptional regulator AlkS (alkS).